Consider the following 122-residue polypeptide: Large ribosomal subunit protein uL14 (122 aa).

It belongs to the universal ribosomal protein uL14 family. In terms of assembly, part of the 50S ribosomal subunit. Forms a cluster with proteins L3 and L19. In the 70S ribosome, L14 and L19 interact and together make contacts with the 16S rRNA in bridges B5 and B8.

Functionally, binds to 23S rRNA. Forms part of two intersubunit bridges in the 70S ribosome. In Cutibacterium acnes (strain DSM 16379 / KPA171202) (Propionibacterium acnes), this protein is Large ribosomal subunit protein uL14.